A 504-amino-acid chain; its full sequence is Maturase K (504 aa).

It belongs to the intron maturase 2 family. MatK subfamily.

It localises to the plastid. The protein resides in the chloroplast. Its function is as follows. Usually encoded in the trnK tRNA gene intron. Probably assists in splicing its own and other chloroplast group II introns. The polypeptide is Maturase K (Aucuba japonica (Japanese laurel)).